The sequence spans 233 residues: Purine nucleoside phosphorylase DeoD-type (233 aa).

Residue H4 coordinates a purine D-ribonucleoside. Residues G20, R24, R43, and 87–90 contribute to the phosphate site; that span reads RIGT. Residues 179-181 and 203-204 each bind a purine D-ribonucleoside; these read EME and SD. The active-site Proton donor is the D204.

This sequence belongs to the PNP/UDP phosphorylase family. As to quaternary structure, homohexamer; trimer of homodimers.

It catalyses the reaction a purine D-ribonucleoside + phosphate = a purine nucleobase + alpha-D-ribose 1-phosphate. The catalysed reaction is a purine 2'-deoxy-D-ribonucleoside + phosphate = a purine nucleobase + 2-deoxy-alpha-D-ribose 1-phosphate. In terms of biological role, catalyzes the reversible phosphorolytic breakdown of the N-glycosidic bond in the beta-(deoxy)ribonucleoside molecules, with the formation of the corresponding free purine bases and pentose-1-phosphate. In Helicobacter pylori (strain G27), this protein is Purine nucleoside phosphorylase DeoD-type.